The chain runs to 964 residues: A-type ATP synthase subunit A (964 aa).

The DOD-type homing endonuclease domain maps to 392 to 518; that stretch reads FLGYLMANGT…LSYLFAKLGI (127 aa).

The protein belongs to the ATPase alpha/beta chains family. Has multiple subunits with at least A(3), B(3), C, D, E, F, H, I and proteolipid K(x). Post-translationally, this protein undergoes a protein self splicing that involves a post-translational excision of the VDE intervening region (intein) followed by peptide ligation.

The protein resides in the cell membrane. The catalysed reaction is ATP + H2O + 4 H(+)(in) = ADP + phosphate + 5 H(+)(out). Component of the A-type ATP synthase that produces ATP from ADP in the presence of a proton gradient across the membrane. The A chain is the catalytic subunit. This chain is A-type ATP synthase subunit A, found in Pyrococcus horikoshii (strain ATCC 700860 / DSM 12428 / JCM 9974 / NBRC 100139 / OT-3).